A 414-amino-acid polypeptide reads, in one-letter code: Enolase (414 aa).

Gln-162 contacts (2R)-2-phosphoglycerate. Glu-204 acts as the Proton donor in catalysis. 3 residues coordinate Mg(2+): Asp-239, Glu-280, and Asp-307. (2R)-2-phosphoglycerate contacts are provided by Lys-332, Arg-361, Ser-362, and Lys-383. Lys-332 functions as the Proton acceptor in the catalytic mechanism.

This sequence belongs to the enolase family. Mg(2+) serves as cofactor.

It is found in the cytoplasm. It localises to the secreted. The protein localises to the cell surface. It carries out the reaction (2R)-2-phosphoglycerate = phosphoenolpyruvate + H2O. It functions in the pathway carbohydrate degradation; glycolysis; pyruvate from D-glyceraldehyde 3-phosphate: step 4/5. Its function is as follows. Catalyzes the reversible conversion of 2-phosphoglycerate (2-PG) into phosphoenolpyruvate (PEP). It is essential for the degradation of carbohydrates via glycolysis. In Campylobacter lari (strain RM2100 / D67 / ATCC BAA-1060), this protein is Enolase.